The following is a 166-amino-acid chain: Ureidoglycolate lyase (166 aa).

This sequence belongs to the ureidoglycolate lyase family. In terms of assembly, homodimer. Ni(2+) serves as cofactor.

It carries out the reaction (S)-ureidoglycolate = urea + glyoxylate. It participates in nitrogen metabolism; (S)-allantoin degradation. Its function is as follows. Catalyzes the catabolism of the allantoin degradation intermediate (S)-ureidoglycolate, generating urea and glyoxylate. Involved in the utilization of allantoin as nitrogen source. The chain is Ureidoglycolate lyase from Rhizobium etli (strain ATCC 51251 / DSM 11541 / JCM 21823 / NBRC 15573 / CFN 42).